Consider the following 638-residue polypeptide: Cytoplasmic dynein 1 intermediate chain 2 (638 aa).

2 stretches are compositionally biased toward basic and acidic residues: residues 1 to 13 (MSDK…ELER) and 20 to 43 (QIRE…KKEA). Disordered stretches follow at residues 1-135 (MSDK…GRGP) and 154-209 (VTYT…HELT). At S2 the chain carries N-acetylserine. S51 is subject to Diphosphoserine. Phosphoserine is present on residues S51 and S90. Low complexity predominate over residues 88-97 (PSSKSVSTPS). T95 is modified (phosphothreonine). Phosphoserine is present on residues S97, S101, and S104. The interval 133-165 (RGPIKLGMAKITQVDFPPREIVTYTKETQTPVT) is interaction with DYNLT1. Residues 190 to 209 (EKILKKDEENDSKAPPHELT) are compositionally biased toward basic and acidic residues. 6 WD repeats span residues 277–326 (SKHR…TTPE), 330–370 (HCQS…RTPV), 379–420 (AHTH…HPQD), 429–469 (SKAV…AGIS), 474–519 (GHQG…PLYS), and 568–607 (EGNP…AVPR).

Belongs to the dynein intermediate chain family. Homodimer. The cytoplasmic dynein 1 complex consists of two catalytic heavy chains (HCs) and a number of non-catalytic subunits presented by intermediate chains (ICs), light intermediate chains (LICs) and light chains (LCs); the composition seems to vary in respect to the IC, LIC and LC composition. The heavy chain homodimer serves as a scaffold for the probable homodimeric assembly of the respective non-catalytic subunits. The ICs and LICs bind directly to the HC dimer and the LCs assemble on the IC dimer. Interacts with DYNLT3. Interacts with DYNLT1. Interacts (dephosphorylated at Ser-90) with DCTN1. Interacts with BICD2. Interacts with SPEF2. Interacts with CFAP61. Post-translationally, the phosphorylation status of Ser-90 appears to be involved in dynactin-dependent target binding. In terms of processing, pyrophosphorylation by 5-diphosphoinositol pentakisphosphate (5-IP7) promotes interaction with DCTN1. Serine pyrophosphorylation is achieved by Mg(2+)-dependent, but enzyme independent transfer of a beta-phosphate from a inositol pyrophosphate to a pre-phosphorylated serine residue. In terms of tissue distribution, skeletal muscle, testis, kidney, brain, heart and spleen.

It localises to the cytoplasm. The protein resides in the cytoskeleton. Acts as one of several non-catalytic accessory components of the cytoplasmic dynein 1 complex that are thought to be involved in linking dynein to cargos and to adapter proteins that regulate dynein function. Cytoplasmic dynein 1 acts as a motor for the intracellular retrograde motility of vesicles and organelles along microtubules. The intermediate chains mediate the binding of dynein to dynactin via its 150 kDa component (p150-glued) DCTN1. Involved in membrane-transport, such as Golgi apparatus, late endosomes and lysosomes. The protein is Cytoplasmic dynein 1 intermediate chain 2 (Dync1i2) of Rattus norvegicus (Rat).